We begin with the raw amino-acid sequence, 327 residues long: GTPase Obg (327 aa).

Residues 1 to 159 (MKFVDSARIV…LKVDLELKLM (159 aa)) form the Obg domain. A disordered region spans residues 120–145 (GGDGGRGNPHFTTSTRQAPRYAEPGG). Residues 160–323 (ADVGLVGFPN…LRNALWNTIN (164 aa)) enclose the OBG-type G domain. GTP contacts are provided by residues 166 to 173 (GFPNAGKS), 191 to 195 (FTTLV), 213 to 216 (DIPG), 280 to 283 (TKMD), and 304 to 306 (SSI). S173 and T193 together coordinate Mg(2+).

This sequence belongs to the TRAFAC class OBG-HflX-like GTPase superfamily. OBG GTPase family. Monomer. Mg(2+) serves as cofactor.

The protein resides in the cytoplasm. Its function is as follows. An essential GTPase which binds GTP, GDP and possibly (p)ppGpp with moderate affinity, with high nucleotide exchange rates and a fairly low GTP hydrolysis rate. Plays a role in control of the cell cycle, stress response, ribosome biogenesis and in those bacteria that undergo differentiation, in morphogenesis control. This Prosthecochloris aestuarii (strain DSM 271 / SK 413) protein is GTPase Obg.